A 212-amino-acid polypeptide reads, in one-letter code: Probable GTP-binding protein EngB (212 aa).

Positions 27–211 (GPPEIAFAGR…QAAIVLAANG (185 aa)) constitute an EngB-type G domain. GTP contacts are provided by residues 35-42 (GRSNVGKS), 62-66 (GRTQE), 89-92 (DMPG), 156-159 (TKTD), and 190-192 (TSS). Mg(2+)-binding residues include S42 and T64.

This sequence belongs to the TRAFAC class TrmE-Era-EngA-EngB-Septin-like GTPase superfamily. EngB GTPase family. Mg(2+) is required as a cofactor.

In terms of biological role, necessary for normal cell division and for the maintenance of normal septation. This chain is Probable GTP-binding protein EngB, found in Mesorhizobium japonicum (strain LMG 29417 / CECT 9101 / MAFF 303099) (Mesorhizobium loti (strain MAFF 303099)).